Consider the following 438-residue polypeptide: Lipoyl synthase, mitochondrial (438 aa).

A mitochondrion-targeting transit peptide spans 1-31 (MAASARGLRTLQSAHSSTTVPRLQLAVSRCY). Over residues 34–57 (TTSPDPPITNSSNSSNSSNSTPTP) the composition is skewed to low complexity. Positions 34–58 (TTSPDPPITNSSNSSNSSNSTPTPK) are disordered. Cys148, Cys153, Cys159, Cys179, Cys183, Cys186, and Ser394 together coordinate [4Fe-4S] cluster. A Radical SAM core domain is found at 162 to 383 (GSSKSAATAT…KERALEMGFL (222 aa)).

It belongs to the radical SAM superfamily. Lipoyl synthase family. The cofactor is [4Fe-4S] cluster.

Its subcellular location is the mitochondrion. The catalysed reaction is [[Fe-S] cluster scaffold protein carrying a second [4Fe-4S](2+) cluster] + N(6)-octanoyl-L-lysyl-[protein] + 2 oxidized [2Fe-2S]-[ferredoxin] + 2 S-adenosyl-L-methionine + 4 H(+) = [[Fe-S] cluster scaffold protein] + N(6)-[(R)-dihydrolipoyl]-L-lysyl-[protein] + 4 Fe(3+) + 2 hydrogen sulfide + 2 5'-deoxyadenosine + 2 L-methionine + 2 reduced [2Fe-2S]-[ferredoxin]. It functions in the pathway protein modification; protein lipoylation via endogenous pathway; protein N(6)-(lipoyl)lysine from octanoyl-[acyl-carrier-protein]: step 2/2. In terms of biological role, catalyzes the radical-mediated insertion of two sulfur atoms into the C-6 and C-8 positions of the octanoyl moiety bound to the lipoyl domains of lipoate-dependent enzymes, thereby converting the octanoylated domains into lipoylated derivatives. This Paracoccidioides brasiliensis (strain Pb18) protein is Lipoyl synthase, mitochondrial.